The chain runs to 219 residues: Antigen 5 like allergen Cul n 1 (219 aa).

Positions 1–19 (MIKKLSIVILFSCISFVLS) are cleaved as a signal peptide. Intrachain disulfides connect cysteine 23–cysteine 45, cysteine 28–cysteine 124, and cysteine 55–cysteine 117. In terms of domain architecture, SCP spans 73 to 211 (LKVHNRLRNK…RHSGNKYFFW (139 aa)).

The protein belongs to the CRISP family. Expressed in salivary glands.

It is found in the secreted. This is Antigen 5 like allergen Cul n 1 from Culicoides nubeculosus (Biting midge).